The following is a 124-amino-acid chain: Fluoride-specific ion channel FluC (124 aa).

A run of 4 helical transmembrane segments spans residues 4 to 24 (VLFV…ISLL), 35 to 55 (FGTL…FALG), 62 to 82 (PEFK…FSTF), and 95 to 115 (LVKA…VVYL). The Na(+) site is built by glycine 74 and threonine 77.

This sequence belongs to the fluoride channel Fluc/FEX (TC 1.A.43) family.

The protein localises to the cell inner membrane. It carries out the reaction fluoride(in) = fluoride(out). Its activity is regulated as follows. Na(+) is not transported, but it plays an essential structural role and its presence is essential for fluoride channel function. Functionally, fluoride-specific ion channel. Important for reducing fluoride concentration in the cell, thus reducing its toxicity. The sequence is that of Fluoride-specific ion channel FluC from Shewanella pealeana (strain ATCC 700345 / ANG-SQ1).